A 369-amino-acid chain; its full sequence is Protein V (369 aa).

2 disordered regions span residues 1–24 and 38–320; these read MDQD…GRES and SEPT…GHRR. Basic and acidic residues predominate over residues 7-20; that stretch reads ISKEDSEVEREASG. Positions 50–61 are enriched in polar residues; it reads LHNTINTLQRPG. 2 stretches are compositionally biased toward basic and acidic residues: residues 99–110 and 150–168; these read AEAHARNVDKQN and GAED…RGED. Phosphoserine; by host occurs at positions 249, 257, and 260. Residues H318, C337, C341, C353, C355, C358, C362, and C365 each coordinate Zn(2+).

The protein belongs to the paramyxoviruses V protein family. In terms of assembly, interacts with host IFIH1/MDA5 and DHX58/LGP2. Interacts with host IRF3. Interacts with host RIGI regulatory protein (via CARDs domain) and host TRIM25 (via SPRY domain); these interactions prevent TRIM25-mediated ubiquitination of RIG-I and disrupts downstream RIG-I signaling.

The protein localises to the host cytoplasm. In terms of biological role, plays an essential role in the inhibition of host immune response. Prevents the establishment of cellular antiviral state by blocking interferon-alpha/beta (IFN-alpha/beta) production and signaling pathway. Interacts with host IFIH1/MDA5 and DHX58/LGP2 to inhibit the transduction pathway involved in the activation of IFN-beta promoter, thus protecting the virus against cell antiviral state. Also interacts with and inhibits host IRF3. Blocks the type I interferon signaling pathway by disrupting the RIG-I signaling pathway. The polypeptide is Protein V (P/V/C) (Sendai virus (strain Hamamatsu) (SeV)).